A 443-amino-acid polypeptide reads, in one-letter code: F-box only protein 39 (443 aa).

The F-box domain maps to 13–59 (QSCWATLPDVCLRRVFWWLGDRDRSRAALVCRKWNQIMYSADLWRYR).

As to quaternary structure, directly interacts with SKP1 and CUL1.

Substrate-recognition component of the SCF (SKP1-CUL1-F-box protein)-type E3 ubiquitin ligase complex. The chain is F-box only protein 39 (Fbxo39) from Rattus norvegicus (Rat).